Reading from the N-terminus, the 226-residue chain is Beta-casein (226 aa).

The tract at residues 1 to 51 (REKEELNVSSETVESLSSNEPDSSSEESITHINKEKSQKFKHEGQQQREVE) is disordered. The residue at position 9 (Ser9) is a Phosphoserine. Thr12 carries the post-translational modification Phosphothreonine. Phosphoserine occurs at positions 15, 17, 18, and 25. Residues 28–51 (SITHINKEKSQKFKHEGQQQREVE) are compositionally biased toward basic and acidic residues.

The protein belongs to the beta-casein family. There are at least three different forms found in milk, with varying degrees of phosphorylation. These include form 5-P which is phosphorylated at three sites, this form is present in low amounts, form 6-P which is phosphorylated at six sites, and form 7-P which is phosphorylated at seven sites. As to expression, mammary gland specific. Secreted in milk.

The protein resides in the secreted. Important role in determination of the surface properties of the casein micelles. The polypeptide is Beta-casein (Equus asinus (Donkey)).